The primary structure comprises 330 residues: Phytanoyl-CoA hydroxylase-interacting protein (330 aa).

Residues threonine 6–tyrosine 115 enclose the Fibronectin type-III domain. 2 N-linked (GlcNAc...) asparagine glycosylation sites follow: asparagine 14 and asparagine 325.

This sequence belongs to the PHYHIP family. In terms of assembly, interacts with PHYH and ADGRB1. Highly expressed in the brain.

Functionally, its interaction with PHYH suggests a role in the development of the central system. In Homo sapiens (Human), this protein is Phytanoyl-CoA hydroxylase-interacting protein (PHYHIP).